A 364-amino-acid polypeptide reads, in one-letter code: Fructose-bisphosphate aldolase A (364 aa).

At Tyr5 the chain carries Phosphotyrosine. Thr9 carries the phosphothreonine modification. Ser36 and Ser39 each carry phosphoserine. An N6-acetyllysine; alternate modification is found at Lys42. Residue Lys42 forms a Glycyl lysine isopeptide (Lys-Gly) (interchain with G-Cter in SUMO1); alternate linkage. Lys42 participates in a covalent cross-link: Glycyl lysine isopeptide (Lys-Gly) (interchain with G-Cter in SUMO2); alternate. Arg43 serves as a coordination point for beta-D-fructose 1,6-bisphosphate. Ser46 is modified (phosphoserine). At Lys99 the chain carries N6-(2-hydroxyisobutyryl)lysine. Lys108 is subject to N6-acetyllysine. An N6-acetyllysine; alternate modification is found at Lys111. Position 111 is an N6-malonyllysine; alternate (Lys111). A Phosphoserine modification is found at Ser132. Lys147 is modified (N6-(2-hydroxyisobutyryl)lysine). The Proton acceptor role is filled by Glu188. Lys230 (schiff-base intermediate with dihydroxyacetone-P) is an active-site residue. Position 272 is a phosphoserine (Ser272). Residues Ser272–Gly274, Ser301, and Arg304 contribute to the beta-D-fructose 1,6-bisphosphate site. Lys312 bears the N6-malonyllysine mark. Lys330 is modified (N6-acetyllysine).

It belongs to the class I fructose-bisphosphate aldolase family. As to quaternary structure, homotetramer. Interacts with SNX9 and WAS. Interacts with FBP2; the interaction blocks FBP2 inhibition by physiological concentrations of AMP and reduces inhibition by Ca(2+).

It is found in the cytoplasm. The protein resides in the myofibril. Its subcellular location is the sarcomere. The protein localises to the i band. It localises to the m line. It carries out the reaction beta-D-fructose 1,6-bisphosphate = D-glyceraldehyde 3-phosphate + dihydroxyacetone phosphate. It participates in carbohydrate degradation; glycolysis; D-glyceraldehyde 3-phosphate and glycerone phosphate from D-glucose: step 4/4. Its function is as follows. Catalyzes the reversible conversion of beta-D-fructose 1,6-bisphosphate (FBP) into two triose phosphate and plays a key role in glycolysis and gluconeogenesis. In addition, may also function as scaffolding protein. This Pongo abelii (Sumatran orangutan) protein is Fructose-bisphosphate aldolase A (ALDOA).